The sequence spans 40 residues: Sulfur globule protein TR2 (40 aa).

The protein to C.vinosum CV3. As to quaternary structure, the protein envelope of the sulfur globules is composed of the three different proteins TR0, TR1 and TR2.

In terms of biological role, structural protein of the sulfur globules, which are intracellular globules that serve for sulfur storage in purple sulfur bacteria. The sequence is that of Sulfur globule protein TR2 from Thiocapsa roseopersicina.